A 387-amino-acid chain; its full sequence is Galanin receptor type 2 (387 aa).

Topologically, residues 1–28 (MNVSGCPGAGNASQAGGGGGWHPEAVIV) are extracellular. 2 N-linked (GlcNAc...) asparagine glycosylation sites follow: asparagine 2 and asparagine 11. The chain crosses the membrane as a helical span at residues 29–49 (PLLFALIFLVGTVGNTLVLAV). The Cytoplasmic segment spans residues 50–60 (LLRGGQAVSTT). Residues 61–81 (NLFILNLGVADLCFILCCVPF) form a helical membrane-spanning segment. Topologically, residues 82-99 (QATIYTLDGWVFGSLLCK) are extracellular. Cysteine 98 and cysteine 175 are disulfide-bonded. Residues 100–121 (AVHFLIFLTMHASSFTLAAVSL) traverse the membrane as a helical segment. Topologically, residues 122–141 (DRYLAIRYPLHSRELRTPRN) are cytoplasmic. The chain crosses the membrane as a helical span at residues 142 to 162 (ALAAIGLIWGLSLLFSGPYLS). Residues 163 to 187 (YYRQSQLANLTVCHPAWSAPRRRAM) lie on the Extracellular side of the membrane. Residues 188–208 (DICTFVFSYLLPVLVLGLTYA) traverse the membrane as a helical segment. The Cytoplasmic portion of the chain corresponds to 209–237 (RTLRYLWRAVDPVAAGSGARRAKRKVTRM). The chain crosses the membrane as a helical span at residues 238-258 (ILIVAALFCLCWMPHHALILC). Residues 259–260 (VW) are Extracellular-facing. The helical transmembrane segment at 261-281 (FGQFPLTRATYALRILSHLVS) threads the bilayer. Topologically, residues 282 to 387 (YANSCVNPIV…GDSILTVDVA (106 aa)) are cytoplasmic.

This sequence belongs to the G-protein coupled receptor 1 family. As to expression, expressed abundantly within the central nervous system in both hypothalamus and hippocampus. In peripheral tissues, the strongest expression was observed in heart, kidney, liver, and small intestine.

The protein resides in the cell membrane. Receptor for the hormone galanin and GALP. Receptor for the hormone spexin-1. The activity of this receptor is mediated by G proteins that activate the phospholipase C/protein kinase C pathway (via G(q)) and that inhibit adenylyl cyclase (via G(i)). The sequence is that of Galanin receptor type 2 (GALR2) from Homo sapiens (Human).